Consider the following 203-residue polypeptide: ATP-dependent Clp protease proteolytic subunit 1 (203 aa).

The active-site Nucleophile is the S101. H126 is an active-site residue.

It belongs to the peptidase S14 family. As to quaternary structure, fourteen ClpP subunits assemble into 2 heptameric rings which stack back to back to give a disk-like structure with a central cavity, resembling the structure of eukaryotic proteasomes.

The protein resides in the cytoplasm. It carries out the reaction Hydrolysis of proteins to small peptides in the presence of ATP and magnesium. alpha-casein is the usual test substrate. In the absence of ATP, only oligopeptides shorter than five residues are hydrolyzed (such as succinyl-Leu-Tyr-|-NHMec, and Leu-Tyr-Leu-|-Tyr-Trp, in which cleavage of the -Tyr-|-Leu- and -Tyr-|-Trp bonds also occurs).. Its function is as follows. Cleaves peptides in various proteins in a process that requires ATP hydrolysis. Has a chymotrypsin-like activity. Plays a major role in the degradation of misfolded proteins. This chain is ATP-dependent Clp protease proteolytic subunit 1, found in Synechococcus sp. (strain JA-2-3B'a(2-13)) (Cyanobacteria bacterium Yellowstone B-Prime).